A 302-amino-acid chain; its full sequence is Putative thiol protease R355 (302 aa).

Residues histidine 182 and aspartate 199 contribute to the active site. Cysteine 244 serves as the catalytic Nucleophile.

Belongs to the peptidase C48 family.

Its subcellular location is the virion. The sequence is that of Putative thiol protease R355 from Acanthamoeba polyphaga mimivirus (APMV).